A 141-amino-acid chain; its full sequence is Large ribosomal subunit protein uL11 (141 aa).

The protein belongs to the universal ribosomal protein uL11 family. Part of the ribosomal stalk of the 50S ribosomal subunit. Interacts with L10 and the large rRNA to form the base of the stalk. L10 forms an elongated spine to which L12 dimers bind in a sequential fashion forming a multimeric L10(L12)X complex. Post-translationally, one or more lysine residues are methylated.

Forms part of the ribosomal stalk which helps the ribosome interact with GTP-bound translation factors. This is Large ribosomal subunit protein uL11 from Chlorobium luteolum (strain DSM 273 / BCRC 81028 / 2530) (Pelodictyon luteolum).